The following is a 66-amino-acid chain: Ocellatin-PT4 (66 aa).

The signal sequence occupies residues 1-22 (MAFLKKSLFLVLFLGLVSLSIC). The propeptide occupies 23–39 (DEEKRQDEDDDDDDDEE). Val-66 carries the valine amide modification.

In terms of tissue distribution, expressed by the skin glands.

The protein resides in the secreted. In terms of biological role, has antibacterial activity against Gram-negative bacteria E.coli ATCC 25922 (MIC=80 uM), K.pneumoniae ATCC 700603 (MIC=310 uM) and S.choleraesuis ATCC 14028 (MIC=310 uM). Shows no hemolytic activity and no cytotoxicity. The sequence is that of Ocellatin-PT4 from Leptodactylus pustulatus (Ceara white-lipped frog).